We begin with the raw amino-acid sequence, 251 residues long: Zinc import ATP-binding protein ZnuC (251 aa).

The 216-residue stretch at V5 to R220 folds into the ABC transporter domain. G37–S44 serves as a coordination point for ATP.

This sequence belongs to the ABC transporter superfamily. Zinc importer (TC 3.A.1.15.5) family. As to quaternary structure, the complex is composed of two ATP-binding proteins (ZnuC), two transmembrane proteins (ZnuB) and a solute-binding protein (ZnuA).

It is found in the cell inner membrane. It catalyses the reaction Zn(2+)(out) + ATP(in) + H2O(in) = Zn(2+)(in) + ADP(in) + phosphate(in) + H(+)(in). Functionally, part of the ABC transporter complex ZnuABC involved in zinc import. Responsible for energy coupling to the transport system. Seems to be important for the virulence. The sequence is that of Zinc import ATP-binding protein ZnuC from Salmonella typhimurium (strain LT2 / SGSC1412 / ATCC 700720).